A 723-amino-acid polypeptide reads, in one-letter code: BBSome complex assembly protein BBS10 (723 aa).

It belongs to the TCP-1 chaperonin family. As to quaternary structure, component of a complex composed at least of MKKS, BBS10, BBS12, TCP1, CCT2, CCT3, CCT4, CCT5 and CCT8.

It localises to the cell projection. The protein resides in the cilium. Functionally, probable molecular chaperone that assists the folding of proteins upon ATP hydrolysis. Plays a role in the assembly of BBSome, a complex involved in ciliogenesis regulating transports vesicles to the cilia. Involved in adipogenic differentiation. The sequence is that of BBSome complex assembly protein BBS10 (BBS10) from Homo sapiens (Human).